A 232-amino-acid chain; its full sequence is tRNA (guanine-N(7)-)-methyltransferase (232 aa).

Glu-38, Asp-63, Glu-90, and Asp-113 together coordinate S-adenosyl-L-methionine. Residue Asp-113 is part of the active site. Substrate-binding residues include Lys-117 and Asp-149.

This sequence belongs to the class I-like SAM-binding methyltransferase superfamily. TrmB family.

It catalyses the reaction guanosine(46) in tRNA + S-adenosyl-L-methionine = N(7)-methylguanosine(46) in tRNA + S-adenosyl-L-homocysteine. Its pathway is tRNA modification; N(7)-methylguanine-tRNA biosynthesis. In terms of biological role, catalyzes the formation of N(7)-methylguanine at position 46 (m7G46) in tRNA. This chain is tRNA (guanine-N(7)-)-methyltransferase, found in Syntrophotalea carbinolica (strain DSM 2380 / NBRC 103641 / GraBd1) (Pelobacter carbinolicus).